We begin with the raw amino-acid sequence, 59 residues long: Potassium channel toxin alpha-KTx 1.14 (59 aa).

Residues 1–22 (MKKISFLLLLAIVICSIGWTDG) form the signal peptide. Glutamine 23 carries the post-translational modification Pyrrolidone carboxylic acid. Disulfide bonds link cysteine 29-cysteine 50, cysteine 35-cysteine 55, and cysteine 39-cysteine 57.

The protein belongs to the short scorpion toxin superfamily. Potassium channel inhibitor family. Alpha-KTx 01 subfamily. As to expression, expressed by the venom gland.

The protein localises to the secreted. Potent blocker of both large-conductance calcium-activated potassium channels (KCa1.1/KCNMA1) and voltage-gated potassium channels (Kv1.3/KCNA3 and ERG1/Kv11.1/KCNH2). In Olivierus martensii (Manchurian scorpion), this protein is Potassium channel toxin alpha-KTx 1.14.